We begin with the raw amino-acid sequence, 241 residues long: Ribose-5-phosphate isomerase A (241 aa).

Substrate contacts are provided by residues Thr29 to Thr32, Asp84 to Asp87, and Lys97 to Gly100. The Proton acceptor role is filled by Glu106. Substrate is bound at residue Lys124.

It belongs to the ribose 5-phosphate isomerase family. As to quaternary structure, homodimer.

The enzyme catalyses aldehydo-D-ribose 5-phosphate = D-ribulose 5-phosphate. It functions in the pathway carbohydrate degradation; pentose phosphate pathway; D-ribose 5-phosphate from D-ribulose 5-phosphate (non-oxidative stage): step 1/1. Its function is as follows. Catalyzes the reversible conversion of ribose-5-phosphate to ribulose 5-phosphate. The chain is Ribose-5-phosphate isomerase A from Thermoplasma volcanium (strain ATCC 51530 / DSM 4299 / JCM 9571 / NBRC 15438 / GSS1).